We begin with the raw amino-acid sequence, 197 residues long: uncharacterized protein (197 aa).

Positions 1–23 (MSARAPKELRLALPPCLLNRTFA) are cleaved as a signal peptide. N-linked (GlcNAc...) asparagine glycosylation is found at asparagine 19 and asparagine 26. Over 24–61 (SPNASGSGNTGARGPGAGGSGTCITQVGQQLFQSFSST) the chain is Extracellular. A helical membrane pass occupies residues 62–82 (LVLIVLVTLIFCLIVLSLSTF). At 83 to 197 (HIHKRRMKKR…EGLLQTVVLS (115 aa)) the chain is on the cytoplasmic side. A disordered region spans residues 94-179 (MQRAQEEYER…ASSPQGAHAV (86 aa)). Composition is skewed to basic and acidic residues over residues 96–107 (RAQEEYERDHCS) and 125–136 (HAKETRLERQPR). Over residues 147 to 161 (SSSSSSSPGLPCQGP) the composition is skewed to low complexity. A compositionally biased stretch (pro residues) spans 162 to 171 (CAPPPPPPAS).

Its subcellular location is the membrane. This is an uncharacterized protein from Pongo abelii (Sumatran orangutan).